The sequence spans 751 residues: Photosystem I P700 chlorophyll a apoprotein A1 (751 aa).

8 helical membrane-spanning segments follow: residues 73 to 96 (VFSA…FHGA), 159 to 182 (LYST…WHYH), 198 to 222 (MNHH…HIAL), 294 to 312 (MAHH…GHQY), 349 to 372 (WHAQ…HHMY), 388 to 414 (LSLF…IFMV), 436 to 458 (AIIS…LYIH), and 533 to 551 (FMVH…LILL). [4Fe-4S] cluster-binding residues include C575 and C584. Transmembrane regions (helical) follow at residues 591–612 (HVFL…HFSW) and 665–687 (LSAY…MFLF). H676 contacts chlorophyll a'. M684 and Y692 together coordinate chlorophyll a. W693 serves as a coordination point for phylloquinone. Residues 725 to 745 (AVGVAHYLLGGIATTWSFFLA) traverse the membrane as a helical segment.

Belongs to the PsaA/PsaB family. The PsaA/B heterodimer binds the P700 chlorophyll special pair and subsequent electron acceptors. PSI consists of a core antenna complex that captures photons, and an electron transfer chain that converts photonic excitation into a charge separation. The eukaryotic PSI reaction center is composed of at least 11 subunits. P700 is a chlorophyll a/chlorophyll a' dimer, A0 is one or more chlorophyll a, A1 is one or both phylloquinones and FX is a shared 4Fe-4S iron-sulfur center. is required as a cofactor.

It localises to the plastid. The protein localises to the chloroplast thylakoid membrane. The enzyme catalyses reduced [plastocyanin] + hnu + oxidized [2Fe-2S]-[ferredoxin] = oxidized [plastocyanin] + reduced [2Fe-2S]-[ferredoxin]. Its function is as follows. PsaA and PsaB bind P700, the primary electron donor of photosystem I (PSI), as well as the electron acceptors A0, A1 and FX. PSI is a plastocyanin/cytochrome c6-ferredoxin oxidoreductase, converting photonic excitation into a charge separation, which transfers an electron from the donor P700 chlorophyll pair to the spectroscopically characterized acceptors A0, A1, FX, FA and FB in turn. Oxidized P700 is reduced on the lumenal side of the thylakoid membrane by plastocyanin or cytochrome c6. The polypeptide is Photosystem I P700 chlorophyll a apoprotein A1 (Ostreococcus tauri).